The sequence spans 1122 residues: Histone deacetylase 5 (1122 aa).

A disordered region spans residues 1 to 24; it reads MNSPNESDGMSGREPSLEILPRTS. A Glycyl lysine isopeptide (Lys-Gly) (interchain with G-Cter in SUMO2) cross-link involves residue Lys35. 2 disordered regions span residues 41–60 and 196–281; these read AMPS…VELR and KEPT…SSPL. Positions 247–258 are enriched in basic and acidic residues; the sequence is DSRDDFPLRKTA. Position 259 is a phosphoserine; by AMPK, CaMK1, SIK1 and PKD/PRKD1 (Ser259). Basic and acidic residues predominate over residues 272 to 281; the sequence is KVAERRSSPL. A Phosphothreonine; by PKC modification is found at Thr292. 2 disordered regions span residues 302–343 and 481–504; these read GAGP…NIPT and MRTV…LPQS. Over residues 312 to 327 the composition is skewed to low complexity; that stretch reads NSAPGSGPSSPNSSHS. Positions 328-340 are enriched in polar residues; it reads TIAENGFTGSVPN. A compositionally biased stretch (low complexity) spans 494-504; that stretch reads SRTQSSPLPQS. The residue at position 498 (Ser498) is a Phosphoserine; by AMPK, CaMK1, SIK1 and PKD/PRKD1. Lys533 carries the post-translational modification N6-acetyllysine. Residues 536–625 form a disordered region; it reads TKTGELPRQP…GPDLEEPGAG (90 aa). A compositionally biased stretch (acidic residues) spans 581–621; the sequence is STQEDLEEEDEEDDGEEEEDCIQVKDEEGESGAEEGPDLEE. 2 positions are modified to phosphoserine: Ser611 and Ser661. The segment at 684–1028 is histone deacetylase; sequence GVVYDTFMLK…VSALLSVELQ (345 aa). 4 residues coordinate Zn(2+): Cys696, Cys698, His704, and Cys781. The active site involves His833. The short motif at 1081 to 1122 is the Nuclear export signal element; it reads EEAETVSAMALLSVGAEQAQAAAAREHSPRPAEEPMEQEPAL. Residues 1097–1122 form a disordered region; the sequence is EQAQAAAAREHSPRPAEEPMEQEPAL. Residues 1104-1113 show a composition bias toward basic and acidic residues; sequence AREHSPRPAE. Ser1108 carries the phosphoserine modification.

It belongs to the histone deacetylase family. HD type 2 subfamily. Interacts with AHRR, BAHD1, BCOR, HDAC7, HDAC9, CTBP1, MEF2C, NCOR2, NRIP1, PHB2 and a 14-3-3 chaperone protein. Interacts with BCL6, DDIT3/CHOP, GRK5, KDM5B and MYOCD. Interacts with EP300 in the presence of TFAP2C. Interacts with ANKRA2. Interacts with CUL7 (as part of the 3M complex); negatively regulated by ANKRA2. Interacts with ZBTB7B; the interaction allows the recruitment of HDAC4 on CD8 loci for deacetylation and possible inhibition of CD8 genes expression. Interacts with RARA. In terms of processing, phosphorylated by AMPK, CaMK1, SIK1 and PRKD1 at Ser-259 and Ser-498. The phosphorylation is required for the export to the cytoplasm and inhibition. Phosphorylated by the PKC kinases PKN1 and PKN2, impairing nuclear import. Phosphorylated by GRK5, leading to nuclear export of HDAC5 and allowing MEF2-mediated transcription. Ubiquitinated. Polyubiquitination however does not lead to its degradation. Ubiquitous.

It localises to the nucleus. It is found in the cytoplasm. It catalyses the reaction N(6)-acetyl-L-lysyl-[histone] + H2O = L-lysyl-[histone] + acetate. Its function is as follows. Responsible for the deacetylation of lysine residues on the N-terminal part of the core histones (H2A, H2B, H3 and H4). Histone deacetylation gives a tag for epigenetic repression and plays an important role in transcriptional regulation, cell cycle progression and developmental events. Histone deacetylases act via the formation of large multiprotein complexes. Involved in muscle maturation by repressing transcription of myocyte enhancer MEF2C. During muscle differentiation, it shuttles into the cytoplasm, allowing the expression of myocyte enhancer factors. Involved in the MTA1-mediated epigenetic regulation of ESR1 expression in breast cancer. Serves as a corepressor of RARA and causes its deacetylation. In association with RARA, plays a role in the repression of microRNA-10a and thereby in the inflammatory response. This is Histone deacetylase 5 (HDAC5) from Homo sapiens (Human).